The following is a 561-amino-acid chain: DNA ligase B (561 aa).

Catalysis depends on Lys125, which acts as the N6-AMP-lysine intermediate.

Belongs to the NAD-dependent DNA ligase family. LigB subfamily.

The catalysed reaction is NAD(+) + (deoxyribonucleotide)n-3'-hydroxyl + 5'-phospho-(deoxyribonucleotide)m = (deoxyribonucleotide)n+m + AMP + beta-nicotinamide D-nucleotide.. Its function is as follows. Catalyzes the formation of phosphodiester linkages between 5'-phosphoryl and 3'-hydroxyl groups in double-stranded DNA using NAD as a coenzyme and as the energy source for the reaction. The protein is DNA ligase B of Salmonella dublin (strain CT_02021853).